A 158-amino-acid polypeptide reads, in one-letter code: SsrA-binding protein (158 aa).

A disordered region spans residues 130–158 (KGKKNHDKREAQAKRDWSRQKQRLLKDHG). Residues 136–158 (DKREAQAKRDWSRQKQRLLKDHG) show a composition bias toward basic and acidic residues.

This sequence belongs to the SmpB family.

The protein localises to the cytoplasm. Its function is as follows. Required for rescue of stalled ribosomes mediated by trans-translation. Binds to transfer-messenger RNA (tmRNA), required for stable association of tmRNA with ribosomes. tmRNA and SmpB together mimic tRNA shape, replacing the anticodon stem-loop with SmpB. tmRNA is encoded by the ssrA gene; the 2 termini fold to resemble tRNA(Ala) and it encodes a 'tag peptide', a short internal open reading frame. During trans-translation Ala-aminoacylated tmRNA acts like a tRNA, entering the A-site of stalled ribosomes, displacing the stalled mRNA. The ribosome then switches to translate the ORF on the tmRNA; the nascent peptide is terminated with the 'tag peptide' encoded by the tmRNA and targeted for degradation. The ribosome is freed to recommence translation, which seems to be the essential function of trans-translation. The chain is SsrA-binding protein from Ruegeria sp. (strain TM1040) (Silicibacter sp.).